The sequence spans 425 residues: UDP-N-acetylglucosamine 1-carboxyvinyltransferase (425 aa).

Position 22 to 23 (22 to 23 (KN)) interacts with phosphoenolpyruvate. Arg98 lines the UDP-N-acetyl-alpha-D-glucosamine pocket. Cys122 functions as the Proton donor in the catalytic mechanism. Cys122 is subject to 2-(S-cysteinyl)pyruvic acid O-phosphothioketal. Residues 127 to 131 (RPVDQ), Asp313, and Ile335 each bind UDP-N-acetyl-alpha-D-glucosamine.

It belongs to the EPSP synthase family. MurA subfamily.

The protein localises to the cytoplasm. It carries out the reaction phosphoenolpyruvate + UDP-N-acetyl-alpha-D-glucosamine = UDP-N-acetyl-3-O-(1-carboxyvinyl)-alpha-D-glucosamine + phosphate. It functions in the pathway cell wall biogenesis; peptidoglycan biosynthesis. Its function is as follows. Cell wall formation. Adds enolpyruvyl to UDP-N-acetylglucosamine. The chain is UDP-N-acetylglucosamine 1-carboxyvinyltransferase from Xylella fastidiosa (strain M23).